A 98-amino-acid polypeptide reads, in one-letter code: PsbF-like protein (98 aa).

A run of 2 helical transmembrane segments spans residues valine 5 to lysine 25 and threonine 73 to methionine 93.

This sequence belongs to the PsbE/PsbF family.

Its subcellular location is the membrane. Functionally, unknown. Resembles PsbF, one of the subunits of the photosystem II reaction center. However, it encodes asparagine rather than histidine at the site PsbF uses to bind heme. The protein is PsbF-like protein of Prochlorococcus marinus (strain MIT 9312).